Consider the following 139-residue polypeptide: Nucleoside diphosphate kinase (139 aa).

K10, F58, R86, T92, R103, and N113 together coordinate ATP. Residue H116 is the Pros-phosphohistidine intermediate of the active site.

This sequence belongs to the NDK family. In terms of assembly, homotetramer. Mg(2+) is required as a cofactor.

The protein localises to the cytoplasm. It carries out the reaction a 2'-deoxyribonucleoside 5'-diphosphate + ATP = a 2'-deoxyribonucleoside 5'-triphosphate + ADP. The catalysed reaction is a ribonucleoside 5'-diphosphate + ATP = a ribonucleoside 5'-triphosphate + ADP. Major role in the synthesis of nucleoside triphosphates other than ATP. The ATP gamma phosphate is transferred to the NDP beta phosphate via a ping-pong mechanism, using a phosphorylated active-site intermediate. The protein is Nucleoside diphosphate kinase of Phenylobacterium zucineum (strain HLK1).